Consider the following 323-residue polypeptide: MMRHLLSAGDLTRDDALLILDTAAELARLADRPIKKLPTLRGRTIVNLFYEDSTRTRTSFEAAAKRLSADVINFSAKGSSVSKGESLKDTALTLEAMGTDAVVIRHWASGAPHRLAGWVRGSVINAGDGTHEHPTQALLDAYTIRRHLGGVDGRRVAIVGDILHSRVARSNVTLLHTLGAEVTLVAPPTLLPVGVESWPCAVSYELDGVLPKCDAVMLLRVQRERMQAAFFPTSREYSRRYGLDAARLALLPEHAIVLHPGPMNRGVEIAAEVADSPRSVVVEQVANGVVVRMAVLYLLLGGGEPALAGRAAEPAAAAIGGGW.

Residues arginine 55 and threonine 56 each coordinate carbamoyl phosphate. An L-aspartate-binding site is contributed by lysine 83. Positions 105, 133, and 136 each coordinate carbamoyl phosphate. Residues arginine 166 and arginine 220 each coordinate L-aspartate. Carbamoyl phosphate contacts are provided by glycine 261 and proline 262.

The protein belongs to the aspartate/ornithine carbamoyltransferase superfamily. ATCase family. As to quaternary structure, heterododecamer (2C3:3R2) of six catalytic PyrB chains organized as two trimers (C3), and six regulatory PyrI chains organized as three dimers (R2).

The catalysed reaction is carbamoyl phosphate + L-aspartate = N-carbamoyl-L-aspartate + phosphate + H(+). It participates in pyrimidine metabolism; UMP biosynthesis via de novo pathway; (S)-dihydroorotate from bicarbonate: step 2/3. Catalyzes the condensation of carbamoyl phosphate and aspartate to form carbamoyl aspartate and inorganic phosphate, the committed step in the de novo pyrimidine nucleotide biosynthesis pathway. The polypeptide is Aspartate carbamoyltransferase catalytic subunit (Acidothermus cellulolyticus (strain ATCC 43068 / DSM 8971 / 11B)).